The following is an 88-amino-acid chain: Small ribosomal subunit protein uS15 (88 aa).

The segment at 1 to 23 (MIASSVKAEVVKSNARSANDTGS) is disordered. Residues 14 to 23 (NARSANDTGS) show a composition bias toward polar residues.

It belongs to the universal ribosomal protein uS15 family. As to quaternary structure, part of the 30S ribosomal subunit. Forms a bridge to the 50S subunit in the 70S ribosome, contacting the 23S rRNA.

Its function is as follows. One of the primary rRNA binding proteins, it binds directly to 16S rRNA where it helps nucleate assembly of the platform of the 30S subunit by binding and bridging several RNA helices of the 16S rRNA. Forms an intersubunit bridge (bridge B4) with the 23S rRNA of the 50S subunit in the ribosome. This is Small ribosomal subunit protein uS15 from Delftia acidovorans (strain DSM 14801 / SPH-1).